The sequence spans 592 residues: Keratin, type II cytoskeletal 5 (592 aa).

The span at 1 to 18 (MSRQSSVSFRSGGSRSFS) shows a compositional bias: low complexity. Positions 1-20 (MSRQSSVSFRSGGSRSFSTA) are disordered. A head region spans residues 1-169 (MSRQSSVSFR…DPSIQRVRTE (169 aa)). A phosphoserine mark is found at S5, S8, S16, and S21. A Phosphothreonine; by CDK1 modification is found at T24. Phosphoserine occurs at positions 26, 36, 50, 64, 71, 75, and 82. The residue at position 153 (T153) is a Phosphothreonine; by CDK1. A Phosphothreonine; by AURKB modification is found at T168. The tract at residues 170 to 205 (EREQIKTLNNKFASFIDKVRFLEQQNKVLDTKWTLL) is coil 1A. The 314-residue stretch at 170 to 483 (EREQIKTLNN…KLLEGEECRL (314 aa)) folds into the IF rod domain. The interval 206–224 (QEQGTKTVRQNLEPLFEQY) is linker 1. Residues 225–317 (INNLRRQLDS…FFDAELSQMQ (93 aa)) are coil 1B. The linker 12 stretch occupies residues 318-340 (THVSDTSVVLSMDNNRNLDLDSI). The coil 2 stretch occupies residues 341 to 479 (IAEVKAQYEE…ATYRKLLEGE (139 aa)). Residues 480–592 (ECRLSGEGVG…TSSSRKSFKS (113 aa)) are tail. The disordered stretch occupies residues 568–592 (GSGGGSSSSVKFVSTTSSSRKSFKS). Residues 574–592 (SSSVKFVSTTSSSRKSFKS) show a composition bias toward low complexity.

It belongs to the intermediate filament family. As to quaternary structure, heterodimer of a type I and a type II keratin. Heterodimer with type I keratin KRT25 leading to the formation of keratin intermediate filament (KIF) network. Forms a heterodimer (via 2B domains) with KRT14 (via 2B domains). Interacts with TCHP. Interacts with EPPK1. Interacts with AMELX. Interacts with PKP1 (via N-terminus) and PKP2. Post-translationally, phosphorylated by CDK1, AURKB and Rho-kinase, phosphorylation is regulated by the cell cycle. Thr-24 phosphorylation, mediated by CDK1, peaks during prometaphase or metaphase cells with phosphorylated filamentous structures evident throughout the cytoplasm during early mitosis. CDK1 phosphorylates Thr-24 in mitotic cells at the site of injury. O-glycosylated.

Its subcellular location is the cytoplasm. In terms of biological role, required for the formation of keratin intermediate filaments in the basal epidermis and maintenance of the skin barrier in response to mechanical stress. Regulates the recruitment of Langerhans cells to the epidermis, potentially by modulation of the abundance of macrophage chemotactic cytokines, macrophage inflammatory cytokines and CTNND1 localization in keratinocytes. The protein is Keratin, type II cytoskeletal 5 (KRT5) of Pan troglodytes (Chimpanzee).